Here is a 308-residue protein sequence, read N- to C-terminus: Bifunctional protein FolD (308 aa).

NADP(+)-binding positions include 171–173 (GRS), serine 198, and isoleucine 239.

This sequence belongs to the tetrahydrofolate dehydrogenase/cyclohydrolase family. As to quaternary structure, homodimer.

It catalyses the reaction (6R)-5,10-methylene-5,6,7,8-tetrahydrofolate + NADP(+) = (6R)-5,10-methenyltetrahydrofolate + NADPH. It carries out the reaction (6R)-5,10-methenyltetrahydrofolate + H2O = (6R)-10-formyltetrahydrofolate + H(+). Its pathway is one-carbon metabolism; tetrahydrofolate interconversion. Catalyzes the oxidation of 5,10-methylenetetrahydrofolate to 5,10-methenyltetrahydrofolate and then the hydrolysis of 5,10-methenyltetrahydrofolate to 10-formyltetrahydrofolate. This is Bifunctional protein FolD from Borreliella burgdorferi (strain ZS7) (Borrelia burgdorferi).